Here is a 489-residue protein sequence, read N- to C-terminus: Aspartyl/glutamyl-tRNA(Asn/Gln) amidotransferase subunit B (489 aa).

The protein belongs to the GatB/GatE family. GatB subfamily. Heterotrimer of A, B and C subunits.

It catalyses the reaction L-glutamyl-tRNA(Gln) + L-glutamine + ATP + H2O = L-glutaminyl-tRNA(Gln) + L-glutamate + ADP + phosphate + H(+). It carries out the reaction L-aspartyl-tRNA(Asn) + L-glutamine + ATP + H2O = L-asparaginyl-tRNA(Asn) + L-glutamate + ADP + phosphate + 2 H(+). Allows the formation of correctly charged Asn-tRNA(Asn) or Gln-tRNA(Gln) through the transamidation of misacylated Asp-tRNA(Asn) or Glu-tRNA(Gln) in organisms which lack either or both of asparaginyl-tRNA or glutaminyl-tRNA synthetases. The reaction takes place in the presence of glutamine and ATP through an activated phospho-Asp-tRNA(Asn) or phospho-Glu-tRNA(Gln). The protein is Aspartyl/glutamyl-tRNA(Asn/Gln) amidotransferase subunit B of Polynucleobacter asymbioticus (strain DSM 18221 / CIP 109841 / QLW-P1DMWA-1) (Polynucleobacter necessarius subsp. asymbioticus).